A 556-amino-acid polypeptide reads, in one-letter code: Peptidylarginine deiminase (556 aa).

Positions 1–23 (MKKLLQAKALILALGLFQLPAIA) are cleaved as a signal peptide. The propeptide occupies 24–43 (QTQMQADRTNGQFATEEMQR). The active-site Amidino-cysteine intermediate is cysteine 351.

It belongs to the agmatine deiminase family. It depends on FAD as a cofactor. FMN is required as a cofactor.

The protein resides in the secreted. With respect to regulation, inhibited by cysteine and TLCK. Inhibited by high concentration of thiourea and thio-L-citrulline. Functionally, deiminates the guanidino group of C-terminal arginine residues on a variety of peptides, including the vasoregulatory peptide-hormone bradykinin, to yield ammonia and a citrulline residue. May promote the growth of the pathogen in the periodontal pocket by producing ammonia, ammonia having a protective effect during acidic cleaning cycles in the mouth. The sequence is that of Peptidylarginine deiminase from Porphyromonas gingivalis (strain ATCC BAA-308 / W83).